Here is a 204-residue protein sequence, read N- to C-terminus: MDRAVLLLSVLSLGVSSQPITEGQRLFSIAVERVHNLHLLAQRLFTEFESSLQTEEQRQLNKIFLQDFCNSDYIISPIDKHETQRSSVLKLLSISYRLIESWEFPSRSLSVGPAARNQISPKLSELKTGILLLIGANQDGAEMFPDSSTLQLAPYGNYYQSLGADESLRRTYELLACFKKDMHKVETYLTVAKCRLSPEANCTL.

An N-terminal signal peptide occupies residues 1–17 (MDRAVLLLSVLSLGVSS). Q18 bears the Pyrrolidone carboxylic acid mark. Residue H35 coordinates Zn(2+). C69 and C177 form a disulfide bridge. E186 lines the Zn(2+) pocket. Residues C194 and C202 are joined by a disulfide bond.

Belongs to the somatotropin/prolactin family.

It localises to the secreted. Functionally, growth hormone plays an important role in growth control and is involved in the regulation of several anabolic processes. Implicated as an osmoregulatory substance important for seawater adaptation. This Morone saxatilis (Striped bass) protein is Somatotropin (gh).